A 197-amino-acid chain; its full sequence is Recombination protein RecR (197 aa).

Residues 56-71 (CQQCRNLSETEICGFC) form a C4-type zinc finger. The Toprim domain occupies 79–174 (DQLCIVETPT…SVTRLAQGIP (96 aa)).

It belongs to the RecR family.

Functionally, may play a role in DNA repair. It seems to be involved in an RecBC-independent recombinational process of DNA repair. It may act with RecF and RecO. The polypeptide is Recombination protein RecR (Hydrogenovibrio crunogenus (strain DSM 25203 / XCL-2) (Thiomicrospira crunogena)).